A 237-amino-acid chain; its full sequence is Ribosomal RNA small subunit methyltransferase G (237 aa).

S-adenosyl-L-methionine-binding positions include glycine 78, phenylalanine 83, alanine 129–glutamate 130, and arginine 148. Residues lysine 218 to leucine 237 are disordered.

The protein belongs to the methyltransferase superfamily. RNA methyltransferase RsmG family.

The protein resides in the cytoplasm. In terms of biological role, specifically methylates the N7 position of a guanine in 16S rRNA. The protein is Ribosomal RNA small subunit methyltransferase G of Streptococcus suis (strain 98HAH33).